Here is a 141-residue protein sequence, read N- to C-terminus: MEMLQGLLLWLLLSVAGVWASRGPLRPLCRPINATLAAENEACPVCITFTTSICAGYCPSMVRVLPAALPPVPQPVCTYRELSFASIRLPGCPPGVDPTVSFPVALSCHCGPCRLSSSDCGGPRAQPLACDRPLLPGLLFL.

An N-terminal signal peptide occupies residues 1 to 20 (MEMLQGLLLWLLLSVAGVWA). S21 bears the Blocked amino end (Ser) mark. 6 disulfides stabilise this stretch: C29–C77, C43–C92, C46–C130, C54–C108, C58–C110, and C113–C120. N33 carries an N-linked (GlcNAc...) asparagine glycan.

Belongs to the glycoprotein hormones subunit beta family. As to quaternary structure, heterodimer of a common alpha chain and a unique beta chain which confers biological specificity to thyrotropin, lutropin, follitropin and gonadotropin.

The protein localises to the secreted. Its function is as follows. Promotes spermatogenesis and ovulation by stimulating the testes and ovaries to synthesize steroids. This chain is Lutropin subunit beta (LHB), found in Sus scrofa (Pig).